A 1379-amino-acid polypeptide reads, in one-letter code: Protein three rows (1379 aa).

A separase cleavage-site region spans residues 1031-1037 (VEPIRKQ). Disordered stretches follow at residues 1206 to 1231 (PEDKKRTATGSVSAVKNTASKVKQSA), 1248 to 1309 (PSAT…ATSK), and 1328 to 1379 (ITTS…RHRH). Polar residues predominate over residues 1213-1228 (ATGSVSAVKNTASKVK). Over residues 1248–1267 (PSATSCSSSGGSGTENTPPS) the composition is skewed to low complexity.

In terms of assembly, interacts with pim and Sse. Cleavage of thr contributes to inactivation of Sse. In terms of processing, proteolytically cleaved after the metaphase-to-anaphase transition, C-terminal cleavage product is degraded. Cleavage can only proceed within complexes that contain active Sse. As to expression, during embryogenesis, expressed in Malpighian tubule buds, and epithelia of foregut and hindgut.

It is found in the cytoplasm. Its function is as follows. Required specifically for chromosome disjunction during all mitoses; maternally provided protein is sufficient until mitosis 14 then zygotic protein is required. Involved in formation and/or maintenance of epithelial structures: bud extension during Malpighian tubule development, and foregut and hindgut morphogenesis. In Drosophila melanogaster (Fruit fly), this protein is Protein three rows (thr).